Reading from the N-terminus, the 193-residue chain is Ion-translocating oxidoreductase complex subunit A (193 aa).

The next 6 helical transmembrane spans lie at Ile5–Leu25, Ile39–Val59, Ile65–Val85, Leu102–Leu122, Val134–Leu154, and Ser171–Val191.

Belongs to the NqrDE/RnfAE family. In terms of assembly, the complex is composed of six subunits: RnfA, RnfB, RnfC, RnfD, RnfE and RnfG.

It is found in the cell inner membrane. Its function is as follows. Part of a membrane-bound complex that couples electron transfer with translocation of ions across the membrane. In Actinobacillus pleuropneumoniae serotype 5b (strain L20), this protein is Ion-translocating oxidoreductase complex subunit A.